The chain runs to 454 residues: Tubulin beta-2 chain (454 aa).

Residues Gln11, Glu69, Ser138, Gly142, Thr143, Gly144, Asn204, and Asn226 each contribute to the GTP site. Glu69 contributes to the Mg(2+) binding site. The tract at residues 426-454 (QEASVDDEAMEDDAEAEGGAGQNEAVEEF) is disordered. Acidic residues predominate over residues 429 to 441 (SVDDEAMEDDAEA).

It belongs to the tubulin family. As to quaternary structure, dimer of alpha and beta chains. A typical microtubule is a hollow water-filled tube with an outer diameter of 25 nm and an inner diameter of 15 nM. Alpha-beta heterodimers associate head-to-tail to form protofilaments running lengthwise along the microtubule wall with the beta-tubulin subunit facing the microtubule plus end conferring a structural polarity. Microtubules usually have 13 protofilaments but different protofilament numbers can be found in some organisms and specialized cells. Requires Mg(2+) as cofactor.

The protein localises to the cytoplasm. It localises to the cytoskeleton. Its subcellular location is the spindle. It is found in the nucleus. Tubulin is the major constituent of microtubules, a cylinder consisting of laterally associated linear protofilaments composed of alpha- and beta-tubulin heterodimers. Microtubules grow by the addition of GTP-tubulin dimers to the microtubule end, where a stabilizing cap forms. Below the cap, tubulin dimers are in GDP-bound state, owing to GTPase activity of alpha-tubulin. Functionally, this is the major beta tubulin of mitotic spindle. In Physarum polycephalum (Slime mold), this protein is Tubulin beta-2 chain (BETC).